Reading from the N-terminus, the 288-residue chain is Energy-coupling factor transporter ATP-binding protein EcfA2 (288 aa).

The region spanning 3–243 (IVFEAVSHIY…RAELEAIGLG (241 aa)) is the ABC transporter domain. 40–47 (GPTGSGKS) contributes to the ATP binding site.

The protein belongs to the ABC transporter superfamily. Energy-coupling factor EcfA family. In terms of assembly, forms a stable energy-coupling factor (ECF) transporter complex composed of 2 membrane-embedded substrate-binding proteins (S component), 2 ATP-binding proteins (A component) and 2 transmembrane proteins (T component).

It is found in the cell membrane. Functionally, ATP-binding (A) component of a common energy-coupling factor (ECF) ABC-transporter complex. Unlike classic ABC transporters this ECF transporter provides the energy necessary to transport a number of different substrates. This Symbiobacterium thermophilum (strain DSM 24528 / JCM 14929 / IAM 14863 / T) protein is Energy-coupling factor transporter ATP-binding protein EcfA2.